A 309-amino-acid polypeptide reads, in one-letter code: Ribonuclease Z (309 aa).

Residues histidine 63, histidine 65, aspartate 67, histidine 68, histidine 145, aspartate 216, and histidine 274 each contribute to the Zn(2+) site. Aspartate 67 functions as the Proton acceptor in the catalytic mechanism.

The protein belongs to the RNase Z family. In terms of assembly, homodimer. The cofactor is Zn(2+).

The enzyme catalyses Endonucleolytic cleavage of RNA, removing extra 3' nucleotides from tRNA precursor, generating 3' termini of tRNAs. A 3'-hydroxy group is left at the tRNA terminus and a 5'-phosphoryl group is left at the trailer molecule.. In terms of biological role, zinc phosphodiesterase, which displays some tRNA 3'-processing endonuclease activity. Probably involved in tRNA maturation, by removing a 3'-trailer from precursor tRNA. This Streptococcus equi subsp. zooepidemicus (strain H70) protein is Ribonuclease Z.